We begin with the raw amino-acid sequence, 213 residues long: N-(5'-phosphoribosyl)anthranilate isomerase (213 aa).

It belongs to the TrpF family.

It carries out the reaction N-(5-phospho-beta-D-ribosyl)anthranilate = 1-(2-carboxyphenylamino)-1-deoxy-D-ribulose 5-phosphate. It participates in amino-acid biosynthesis; L-tryptophan biosynthesis; L-tryptophan from chorismate: step 3/5. The protein is N-(5'-phosphoribosyl)anthranilate isomerase of Hahella chejuensis (strain KCTC 2396).